We begin with the raw amino-acid sequence, 217 residues long: Small ribosomal subunit protein uS3 (217 aa).

The KH type-2 domain occupies 38 to 106 (IRNFIKKELA…QVHINIIEIK (69 aa)).

Belongs to the universal ribosomal protein uS3 family. As to quaternary structure, part of the 30S ribosomal subunit. Forms a tight complex with proteins S10 and S14.

In terms of biological role, binds the lower part of the 30S subunit head. Binds mRNA in the 70S ribosome, positioning it for translation. In Streptococcus suis (strain 98HAH33), this protein is Small ribosomal subunit protein uS3.